The sequence spans 214 residues: GTP-binding nuclear protein GSP1/Ran (214 aa).

Residues 4–168 (EVAAFKLVLV…LWLARKLAGN (165 aa)) enclose the Small GTPase Ran-type domain. 15-22 (DGGTGKTT) contributes to the GTP binding site. Residues 34-42 (NRYNATLGV) form a switch-I region. GTP contacts are provided by residues Gly-65, 119 to 122 (NKVD), and 147 to 149 (SAK). The segment at 65 to 81 (GQEKFGGLRDGYYINGQ) is switch-II.

This sequence belongs to the small GTPase superfamily. Ran family. Found in a nuclear export complex with RanGTP, exportin and pre-miRNA.

Its subcellular location is the nucleus. Functionally, GTP-binding protein involved in nucleocytoplasmic transport. Required for the import of protein into the nucleus and also for RNA export. Involved in chromatin condensation and control of cell cycle. In Yarrowia lipolytica (strain CLIB 122 / E 150) (Yeast), this protein is GTP-binding nuclear protein GSP1/Ran (GSP1).